We begin with the raw amino-acid sequence, 423 residues long: CinA-like protein (423 aa).

The protein belongs to the CinA family.

The sequence is that of CinA-like protein from Chlorobaculum tepidum (strain ATCC 49652 / DSM 12025 / NBRC 103806 / TLS) (Chlorobium tepidum).